Consider the following 299-residue polypeptide: 33 kDa chaperonin (299 aa).

2 disulfides stabilise this stretch: Cys-240–Cys-242 and Cys-273–Cys-276.

It belongs to the HSP33 family. Post-translationally, under oxidizing conditions two disulfide bonds are formed involving the reactive cysteines. Under reducing conditions zinc is bound to the reactive cysteines and the protein is inactive.

The protein resides in the cytoplasm. In terms of biological role, redox regulated molecular chaperone. Protects both thermally unfolding and oxidatively damaged proteins from irreversible aggregation. Plays an important role in the bacterial defense system toward oxidative stress. The polypeptide is 33 kDa chaperonin (Gloeothece citriformis (strain PCC 7424) (Cyanothece sp. (strain PCC 7424))).